The following is a 426-amino-acid chain: Putative F-box protein At4g38870 (426 aa).

The F-box domain maps to 47–92 (SVNSELLPVDLIMEILKKLSLKPLIRFLCVSKLWASIIRDPYFMKL).

In Arabidopsis thaliana (Mouse-ear cress), this protein is Putative F-box protein At4g38870.